Reading from the N-terminus, the 191-residue chain is MADLRILVSIILMTNAVLEKGGCTGPPGPPGHPGPPGIRGPPGIRGIPGLPGPPGTPGPSVKCPCHRQSAFTVKLSGQLPSPSKPVPFTEVLYNAQRDLQEDTGVFTCRVPGNYHFLFDVDLHHCKVTVQLMRDKSSVLEKHQVSTKEPRSLSGMLTLPLHVGEKVWLEAKVETEKPEQARVTIYFSGFLT.

The first 16 residues, 1–16 (MADLRILVSIILMTNA), serve as a signal peptide directing secretion. Residues 22–58 (GCTGPPGPPGHPGPPGIRGPPGIRGIPGLPGPPGTPG) enclose the Collagen-like domain. The tract at residues 22-61 (GCTGPPGPPGHPGPPGIRGPPGIRGIPGLPGPPGTPGPSV) is disordered. Over residues 26 to 39 (PPGPPGHPGPPGIR) the composition is skewed to pro residues. The C1q domain maps to 64-191 (PCHRQSAFTV…VTIYFSGFLT (128 aa)).

The protein localises to the secreted. The polypeptide is Protein HP-20 homolog (Bos taurus (Bovine)).